The following is a 445-amino-acid chain: Hydroxymethylglutaryl-CoA synthase (445 aa).

Position 31 (aspartate 31) interacts with (3S)-3-hydroxy-3-methylglutaryl-CoA. The active-site Proton donor/acceptor is glutamate 83. Positions 120, 163, 211, 244, 253, 328, and 364 each coordinate (3S)-3-hydroxy-3-methylglutaryl-CoA. The Acyl-thioester intermediate role is filled by cysteine 120. Histidine 244 serves as the catalytic Proton donor/acceptor.

It belongs to the thiolase-like superfamily. HMG-CoA synthase family.

The enzyme catalyses acetoacetyl-CoA + acetyl-CoA + H2O = (3S)-3-hydroxy-3-methylglutaryl-CoA + CoA + H(+). The protein operates within metabolic intermediate biosynthesis; (R)-mevalonate biosynthesis; (R)-mevalonate from acetyl-CoA: step 2/3. In contrast to bacterial and eukaryotic HMG-CoA synthases, is insensitive to feedback substrate inhibition by acetoacetyl-CoA. Enzymatic activity is inhibited by hymeglusin, which also blocks the propagation of H.volcanii cells in vivo, indicating the critical role that the mevalonate pathway plays in isoprenoid biosynthesis by these archaea. Functionally, catalyzes the condensation of acetyl-CoA with acetoacetyl-CoA to form 3-hydroxy-3-methylglutaryl-CoA (HMG-CoA). Functions in the mevalonate (MVA) pathway leading to isopentenyl diphosphate (IPP), a key precursor for the biosynthesis of isoprenoid compounds such as archaeal membrane lipids. In Haloferax volcanii (strain ATCC 29605 / DSM 3757 / JCM 8879 / NBRC 14742 / NCIMB 2012 / VKM B-1768 / DS2) (Halobacterium volcanii), this protein is Hydroxymethylglutaryl-CoA synthase (hmgB).